The chain runs to 238 residues: Large ribosomal subunit protein uL1 (238 aa).

It belongs to the universal ribosomal protein uL1 family. In terms of assembly, part of the 50S ribosomal subunit.

Its function is as follows. Binds directly to 23S rRNA. The L1 stalk is quite mobile in the ribosome, and is involved in E site tRNA release. In terms of biological role, protein L1 is also a translational repressor protein, it controls the translation of the L11 operon by binding to its mRNA. The polypeptide is Large ribosomal subunit protein uL1 (Rippkaea orientalis (strain PCC 8801 / RF-1) (Cyanothece sp. (strain PCC 8801))).